The sequence spans 339 residues: Ureidoglycine carbamoyltransferase (339 aa).

It belongs to the aspartate/ornithine carbamoyltransferase superfamily. In terms of assembly, homodimer.

It carries out the reaction (S)-2-ureidoglycine + carbamoyl phosphate = allantoate + phosphate + H(+). The protein operates within purine metabolism. Functionally, catalyzes the phosphorolysis of allantoate to ureidoglycine and carbamoyl phosphate. Is likely involved in a purine degradation pathway. The polypeptide is Ureidoglycine carbamoyltransferase (Rubrobacter xylanophilus (strain DSM 9941 / JCM 11954 / NBRC 16129 / PRD-1)).